A 151-amino-acid chain; its full sequence is S-ribosylhomocysteine lyase (151 aa).

Fe cation contacts are provided by His54, His58, and Cys121.

The protein belongs to the LuxS family. Homodimer. It depends on Fe cation as a cofactor.

It carries out the reaction S-(5-deoxy-D-ribos-5-yl)-L-homocysteine = (S)-4,5-dihydroxypentane-2,3-dione + L-homocysteine. Its function is as follows. Involved in the synthesis of autoinducer 2 (AI-2) which is secreted by bacteria and is used to communicate both the cell density and the metabolic potential of the environment. The regulation of gene expression in response to changes in cell density is called quorum sensing. Catalyzes the transformation of S-ribosylhomocysteine (RHC) to homocysteine (HC) and 4,5-dihydroxy-2,3-pentadione (DPD). The protein is S-ribosylhomocysteine lyase of Clostridium botulinum (strain Alaska E43 / Type E3).